The sequence spans 90 residues: Probable Fe(2+)-trafficking protein (90 aa).

This sequence belongs to the Fe(2+)-trafficking protein family. As to quaternary structure, monomer.

In terms of biological role, could be a mediator in iron transactions between iron acquisition and iron-requiring processes, such as synthesis and/or repair of Fe-S clusters in biosynthetic enzymes. This Sodalis glossinidius (strain morsitans) protein is Probable Fe(2+)-trafficking protein.